The following is a 131-amino-acid chain: Putative pre-16S rRNA nuclease (131 aa).

It belongs to the YqgF nuclease family.

The protein resides in the cytoplasm. In terms of biological role, could be a nuclease involved in processing of the 5'-end of pre-16S rRNA. The chain is Putative pre-16S rRNA nuclease from Bordetella avium (strain 197N).